A 244-amino-acid chain; its full sequence is Phosphoadenosine 5'-phosphosulfate reductase (244 aa).

The active-site Nucleophile; cysteine thiosulfonate intermediate is C239.

This sequence belongs to the PAPS reductase family. CysH subfamily.

The protein localises to the cytoplasm. It catalyses the reaction [thioredoxin]-disulfide + sulfite + adenosine 3',5'-bisphosphate + 2 H(+) = [thioredoxin]-dithiol + 3'-phosphoadenylyl sulfate. The protein operates within sulfur metabolism; hydrogen sulfide biosynthesis; sulfite from sulfate: step 3/3. Functionally, catalyzes the formation of sulfite from phosphoadenosine 5'-phosphosulfate (PAPS) using thioredoxin as an electron donor. This Escherichia coli O81 (strain ED1a) protein is Phosphoadenosine 5'-phosphosulfate reductase.